We begin with the raw amino-acid sequence, 268 residues long: Putative hydro-lyase ACICU_01268 (268 aa).

It belongs to the D-glutamate cyclase family.

The polypeptide is Putative hydro-lyase ACICU_01268 (Acinetobacter baumannii (strain ACICU)).